A 111-amino-acid chain; its full sequence is T cell receptor beta variable 20-1 (111 aa).

Positions 1–15 (MLLLLLLLGPGSGLG) are cleaved as a signal peptide. One can recognise an Ig-like domain in the interval 16–111 (AVVSQHPSRV…DSSFYICSAR (96 aa)). A disulfide bridge connects residues cysteine 37 and cysteine 108.

In terms of assembly, alpha-beta TR is a heterodimer composed of an alpha and beta chain; disulfide-linked. The alpha-beta TR is associated with the transmembrane signaling CD3 coreceptor proteins to form the TR-CD3 (TcR or TCR). The assembly of alpha-beta TR heterodimers with CD3 occurs in the endoplasmic reticulum where a single alpha-beta TR heterodimer associates with one CD3D-CD3E heterodimer, one CD3G-CD3E heterodimer and one CD247 homodimer forming a stable octameric structure. CD3D-CD3E and CD3G-CD3E heterodimers preferentially associate with TR alpha and TR beta chains, respectively. The association of the CD247 homodimer is the last step of TcR assembly in the endoplasmic reticulum and is required for transport to the cell surface.

The protein localises to the cell membrane. Its function is as follows. V region of the variable domain of T cell receptor (TR) beta chain that participates in the antigen recognition. Alpha-beta T cell receptors are antigen specific receptors which are essential to the immune response and are present on the cell surface of T lymphocytes. Recognize peptide-major histocompatibility (MH) (pMH) complexes that are displayed by antigen presenting cells (APC), a prerequisite for efficient T cell adaptive immunity against pathogens. Binding of alpha-beta TR to pMH complex initiates TR-CD3 clustering on the cell surface and intracellular activation of LCK that phosphorylates the ITAM motifs of CD3G, CD3D, CD3E and CD247 enabling the recruitment of ZAP70. In turn ZAP70 phosphorylates LAT, which recruits numerous signaling molecules to form the LAT signalosome. The LAT signalosome propagates signal branching to three major signaling pathways, the calcium, the mitogen-activated protein kinase (MAPK) kinase and the nuclear factor NF-kappa-B (NF-kB) pathways, leading to the mobilization of transcription factors that are critical for gene expression and essential for T cell growth and differentiation. The T cell repertoire is generated in the thymus, by V-(D)-J rearrangement. This repertoire is then shaped by intrathymic selection events to generate a peripheral T cell pool of self-MH restricted, non-autoaggressive T cells. Post-thymic interaction of alpha-beta TR with the pMH complexes shapes TR structural and functional avidity. In Homo sapiens (Human), this protein is T cell receptor beta variable 20-1.